Reading from the N-terminus, the 727-residue chain is 5'-AMP-activated serine/threonine-protein kinase catalytic subunit alpha (727 aa).

The 254-residue stretch at 31–284 (YRLDKTLGIG…IHEIRNHPWF (254 aa)) folds into the Protein kinase domain. Residues 37-45 (LGIGSFGKV) and lysine 60 each bind ATP. Aspartate 154 (proton acceptor) is an active-site residue. Threonine 188 is subject to Phosphothreonine. The segment at 382–590 (FTTTTGFNPS…GSNNNSYEGG (209 aa)) is disordered. Composition is skewed to low complexity over residues 391–483 (SNSN…SSIS) and 494–586 (NLNN…NNNS). In terms of domain architecture, KA1 spans 679–727 (RMVNGKPIKLVLQLFRVAENRYLLDIKKIEGEIFIFFDICSLMLEELNL).

It belongs to the protein kinase superfamily. CAMK Ser/Thr protein kinase family. SNF1 subfamily. Heterotrimer of an alpha catalytic subunit, a beta and a gamma non-catalytic subunits.

The enzyme catalyses L-seryl-[protein] + ATP = O-phospho-L-seryl-[protein] + ADP + H(+). It carries out the reaction L-threonyl-[protein] + ATP = O-phospho-L-threonyl-[protein] + ADP + H(+). Activated enzyme phosphorylates target proteins and initiates downstream signaling pathways that shift metabolism from anabolic to catabolic pathways. Acts as a highly sensitive cellular energy sensor. The protein is 5'-AMP-activated serine/threonine-protein kinase catalytic subunit alpha (snfA) of Dictyostelium discoideum (Social amoeba).